The primary structure comprises 141 residues: ATP synthase epsilon chain (141 aa).

Belongs to the ATPase epsilon chain family. F-type ATPases have 2 components, CF(1) - the catalytic core - and CF(0) - the membrane proton channel. CF(1) has five subunits: alpha(3), beta(3), gamma(1), delta(1), epsilon(1). CF(0) has three main subunits: a, b and c.

Its subcellular location is the cell inner membrane. Its function is as follows. Produces ATP from ADP in the presence of a proton gradient across the membrane. The polypeptide is ATP synthase epsilon chain (Paraburkholderia phymatum (strain DSM 17167 / CIP 108236 / LMG 21445 / STM815) (Burkholderia phymatum)).